A 321-amino-acid polypeptide reads, in one-letter code: Acyl-CoA 5-desaturase AL21 (321 aa).

A run of 2 helical transmembrane segments spans residues 42 to 62 (IFHI…PFTF) and 64 to 84 (WSAF…GTTL). Residues His-87, His-92, His-124, His-127, and His-128 each contribute to the Fe cation site. The short motif at 87–92 (HRNLTH) is the Histidine box-1 element. The Histidine box-2 motif lies at 124–128 (HRYHH). Residues 190–210 (LQAALLYMFGGFPFIVWGMAV) form a helical membrane-spanning segment. 4 residues coordinate Fe cation: His-227, His-256, His-259, and His-260. Positions 256–260 (HNNHH) match the Histidine box-3 motif.

It belongs to the fatty acid desaturase type 1 family. Requires Fe(2+) as cofactor.

The protein resides in the membrane. It catalyses the reaction (11Z,14Z)-eicosadienoyl-CoA + AH2 + O2 = (5Z,11Z,14Z)-eicosatrienoyl-CoA + A + 2 H2O. The enzyme catalyses (11Z,14Z,17Z)-eicosatrienoyl-CoA + AH2 + O2 = (5Z,11Z,14Z,17Z)-eicosatetraenoyl-CoA + A + 2 H2O. It functions in the pathway lipid metabolism; polyunsaturated fatty acid biosynthesis. Catalyzes the desaturation of 20:2Delta(11,14) and 20:3Delta(11,14,17) to generate sciadonic acid (20:3Delta(5,11,14)) and juniperonic acid (20:4Delta(5,11,14,17)). The enzyme can also use 16:0 and 18:0 as substrates. In Anemone leveillei (Windflower), this protein is Acyl-CoA 5-desaturase AL21.